Here is a 283-residue protein sequence, read N- to C-terminus: MACGSSMNSFDMNSIPLVALNYTVRHRLCLYLNPNAVVAADWTRLAEEMGYDYLEIRNFDRYPDSTMKLLEDWQKKCFRATVGGLLEMLKKMERNDILTDLAPLIEADCKKYLEKKHGPLPLQDDNVDSSEQYRITKSDDPYGSMPETFDAFICCCAQDILFVQEMISRLEQTDYKLKLCVFDRDVLPGTCLWSITSELIENRCRKMVVIISDDYLDSSECDFQTKFALSLGPGAREKRLIPVKYKPMKRPFPSILRFITLCDNTNPYTKVWFWDKLAKALAR.

The 79-residue stretch at 27-105 (RLCLYLNPNA…DILTDLAPLI (79 aa)) folds into the Death domain. Residues 106 to 143 (EADCKKYLEKKHGPLPLQDDNVDSSEQYRITKSDDPYG) are intermediate domain. The region spanning 147-281 (ETFDAFICCC…WFWDKLAKAL (135 aa)) is the TIR domain.

It is found in the cytoplasm. Adapter protein involved in the Toll-like receptor and IL-1 receptor signaling pathway in the innate immune response. Activates expression of target genes in the Spemann organizer region during early embryonic development. Is required for normal axis formation. This is Myeloid differentiation primary response protein MyD88-B (myd88-b) from Xenopus laevis (African clawed frog).